A 640-amino-acid chain; its full sequence is Insulin-like growth factor 1 receptor (640 aa).

Fibronectin type-III domains lie at 5 to 101 (VPRP…TMPA) and 107 to 200 (IPGP…VQAK). Residues 14 to 208 (EVMQIANTTM…AKTTYENFIH (195 aa)) lie on the Extracellular side of the membrane. Asn-20, Asn-29, Asn-37, Asn-173, and Asn-186 each carry an N-linked (GlcNAc...) asparagine glycan. Residues 209-232 (LMIALPIAVLLIVGGLVIMLYVFH) traverse the membrane as a helical segment. The Cytoplasmic portion of the chain corresponds to 233–640 (RKRNSSRLGN…ALPLPQSSTC (408 aa)). The IRS1- and SHC1-binding motif lies at 250–253 (NPEY). Tyr-253 is modified (phosphotyrosine). The Protein kinase domain maps to 272–547 (ITMSRELGQG…SVKDEMEAGF (276 aa)). Residues 278-286 (LGQGSFGMV) and Lys-306 contribute to the ATP site. Asp-408 (proton acceptor) is an active-site residue. Tyr-434, Tyr-438, and Tyr-439 each carry phosphotyrosine; by autocatalysis. Residues Lys-441 and Lys-444 each participate in a glycyl lysine isopeptide (Lys-Gly) (interchain with G-Cter in ubiquitin) cross-link. At Ser-551 the chain carries Phosphoserine; by GSK3-beta. At Ser-555 the chain carries Phosphoserine. The disordered stretch occupies residues 555–640 (SEENKPPEPE…ALPLPQSSTC (86 aa)). Positions 563–572 (PEELDLEPEN) are enriched in acidic residues. Residues 573–589 (MESVPLDPSASSASLPL) are compositionally biased toward low complexity. Residues 590 to 599 (PDRHSGHKAE) are compositionally biased toward basic and acidic residues.

It belongs to the protein kinase superfamily. Tyr protein kinase family. Insulin receptor subfamily. Tetramer of 2 alpha and 2 beta chains linked by disulfide bonds. The alpha chains contribute to the formation of the ligand-binding domain, while the beta chain carries the kinase domain. Interacts with PIK3R1 and with the PTB/PID domains of IRS1 and SHC1 in vitro when autophosphorylated on tyrosine residues. Forms a hybrid receptor with INSR, the hybrid is a tetramer consisting of 1 alpha chain and 1 beta chain of INSR and 1 alpha chain and 1 beta chain of IGF1R. Interacts with ARRB1 and ARRB2. Interacts with GRB10. Interacts with RACK1. Interacts with SOCS1, SOCS2 and SOCS3. Interacts with 14-3-3 proteins. Interacts with NMD2. Interacts with MAP3K5. Interacts with STAT3. Interacts (nascent precursor form) with ZFAND2B. In terms of processing, autophosphorylated on tyrosine residues in response to ligand binding. Autophosphorylation occurs in trans, i.e. one subunit of the dimeric receptor phosphorylates tyrosine residues on the other subunit. Autophosphorylation occurs in a sequential manner; Tyr-438 is predominantly phosphorylated first, followed by phosphorylation of Tyr-434 and Tyr-439. While every single phosphorylation increases kinase activity, all three tyrosine residues in the kinase activation loop (Tyr-438, Tyr-434 and Tyr-439) have to be phosphorylated for optimal activity. Can be autophosphorylated at additional tyrosine residues (in vitro). Autophosphorylated is followed by phosphorylation of juxtamembrane tyrosines and C-terminal serines. May also be phosphorylated at Tyr-434 and Tyr-439 by mTORC2. Phosphorylation of Tyr-253 is required for IRS1- and SHC1-binding. Phosphorylation of Ser-551 by GSK-3beta restrains kinase activity and promotes cell surface expression, it requires a priming phosphorylation at Ser-555. Dephosphorylated by PTPN1. Polyubiquitinated at Lys-441 and Lys-444 through both 'Lys-48' and 'Lys-29' linkages, promoting receptor endocytosis and subsequent degradation by the proteasome. Ubiquitination is facilitated by pre-existing phosphorylation. Post-translationally, sumoylated with SUMO1. In terms of processing, controlled by regulated intramembrane proteolysis (RIP). Undergoes metalloprotease-dependent constitutive ectodomain shedding to produce a membrane-anchored 52 kDa C-Terminal fragment which is further processed by presenilin gamma-secretase to yield an intracellular 50 kDa fragment.

The protein localises to the cell membrane. It carries out the reaction L-tyrosyl-[protein] + ATP = O-phospho-L-tyrosyl-[protein] + ADP + H(+). Activated by autophosphorylation at Tyr-434, Tyr-438 and Tyr-439 on the kinase activation loop; phosphorylation at all three tyrosine residues is required for optimal kinase activity. Inhibited by MSC1609119A-1, BMS-754807, PQIP, benzimidazole pyridinone, isoquinolinedione, bis-azaindole, 3-cyanoquinoline, 2,4-bis-arylamino-1,3-pyrimidine, pyrrolopyrimidine, pyrrole-5-carboxaldehyde, picropodophyllin (PPP), tyrphostin derivatives. While most inhibitors bind to the ATP binding pocket, MSC1609119A-1 functions as allosteric inhibitor and binds close to the DFG motif and the activation loop. In terms of biological role, receptor tyrosine kinase which mediates actions of insulin-like growth factor 1 (IGF1). Binds IGF1 with high affinity and IGF2 and insulin (INS) with a lower affinity. The activated IGF1R is involved in cell growth and survival control. IGF1R is crucial for tumor transformation and survival of malignant cell. Ligand binding activates the receptor kinase, leading to receptor autophosphorylation, and tyrosines phosphorylation of multiple substrates, that function as signaling adapter proteins including, the insulin-receptor substrates (IRS1/2), Shc and 14-3-3 proteins. Phosphorylation of IRSs proteins lead to the activation of two main signaling pathways: the PI3K-AKT/PKB pathway and the Ras-MAPK pathway. The result of activating the MAPK pathway is increased cellular proliferation, whereas activating the PI3K pathway inhibits apoptosis and stimulates protein synthesis. Phosphorylated IRS1 can activate the 85 kDa regulatory subunit of PI3K (PIK3R1), leading to activation of several downstream substrates, including protein AKT/PKB. AKT phosphorylation, in turn, enhances protein synthesis through mTOR activation and triggers the antiapoptotic effects of IGFIR through phosphorylation and inactivation of BAD. In parallel to PI3K-driven signaling, recruitment of Grb2/SOS by phosphorylated IRS1 or Shc leads to recruitment of Ras and activation of the ras-MAPK pathway. In addition to these two main signaling pathways IGF1R signals also through the Janus kinase/signal transducer and activator of transcription pathway (JAK/STAT). Phosphorylation of JAK proteins can lead to phosphorylation/activation of signal transducers and activators of transcription (STAT) proteins. In particular activation of STAT3, may be essential for the transforming activity of IGF1R. The JAK/STAT pathway activates gene transcription and may be responsible for the transforming activity. JNK kinases can also be activated by the IGF1R. IGF1 exerts inhibiting activities on JNK activation via phosphorylation and inhibition of MAP3K5/ASK1, which is able to directly associate with the IGF1R. When present in a hybrid receptor with INSR, binds IGF1. In Bos taurus (Bovine), this protein is Insulin-like growth factor 1 receptor (IGF1R).